The following is a 259-amino-acid chain: AA9 family lytic polysaccharide monooxygenase E (259 aa).

The signal sequence occupies residues 1-20 (MKATVLAGLAAVIAAQGVAG). 2 residues coordinate Cu(2+): His21 and His99. A disulfide bridge connects residues Cys69 and Cys193. O2 is bound by residues His179 and Gln188. Tyr190 is a Cu(2+) binding site.

The protein belongs to the polysaccharide monooxygenase AA9 family. Requires Cu(2+) as cofactor.

The protein resides in the secreted. It carries out the reaction [(1-&gt;4)-beta-D-glucosyl]n+m + reduced acceptor + O2 = 4-dehydro-beta-D-glucosyl-[(1-&gt;4)-beta-D-glucosyl]n-1 + [(1-&gt;4)-beta-D-glucosyl]m + acceptor + H2O.. In terms of biological role, lytic polysaccharide monooxygenase (LPMO) that depolymerizes crystalline and amorphous polysaccharides via the oxidation of scissile alpha- or beta-(1-4)-glycosidic bonds, yielding C1 or C4 oxidation products. Catalysis by LPMOs requires the reduction of the active-site copper from Cu(II) to Cu(I) by a reducing agent and H(2)O(2) or O(2) as a cosubstrate. This Malbranchea cinnamomea (Thermophilic fungus) protein is AA9 family lytic polysaccharide monooxygenase E.